The primary structure comprises 414 residues: V-set and immunoglobulin domain-containing protein 8 (414 aa).

The first 21 residues, 1–21 (MRVGGAFHLLLVCLSPALLSA), serve as a signal peptide directing secretion. Ig-like V-type domains follow at residues 22–141 (VRIN…VIVT) and 146–257 (PAVP…VKVS). Over 22-263 (VRINGDGQEV…VKVSDSRRIG (242 aa)) the chain is Extracellular. Intrachain disulfides connect C44/C126 and C167/C239. A helical membrane pass occupies residues 264–284 (VIIGIVLGSLLALGCLAVGIW). Over 285–414 (GLVCCCCGGS…PVQCKNGLLV (130 aa)) the chain is Cytoplasmic.

The protein localises to the membrane. The chain is V-set and immunoglobulin domain-containing protein 8 from Homo sapiens (Human).